The following is a 216-amino-acid chain: Pyridoxine/pyridoxamine 5'-phosphate oxidase (216 aa).

Substrate-binding positions include 9–12 and Arg67; that span reads RLSY. Residues 62–67, 77–78, Lys84, and Gln106 contribute to the FMN site; these read RIVLLR and YT. The substrate site is built by Tyr124, Arg128, and Ser132. FMN contacts are provided by residues 142–143 and Trp188; that span reads QS. 194–196 serves as a coordination point for substrate; it reads RMH. Arg198 lines the FMN pocket.

Belongs to the pyridoxamine 5'-phosphate oxidase family. As to quaternary structure, homodimer. Requires FMN as cofactor.

It catalyses the reaction pyridoxamine 5'-phosphate + O2 + H2O = pyridoxal 5'-phosphate + H2O2 + NH4(+). It carries out the reaction pyridoxine 5'-phosphate + O2 = pyridoxal 5'-phosphate + H2O2. It functions in the pathway cofactor metabolism; pyridoxal 5'-phosphate salvage; pyridoxal 5'-phosphate from pyridoxamine 5'-phosphate: step 1/1. It participates in cofactor metabolism; pyridoxal 5'-phosphate salvage; pyridoxal 5'-phosphate from pyridoxine 5'-phosphate: step 1/1. Catalyzes the oxidation of either pyridoxine 5'-phosphate (PNP) or pyridoxamine 5'-phosphate (PMP) into pyridoxal 5'-phosphate (PLP). The polypeptide is Pyridoxine/pyridoxamine 5'-phosphate oxidase (Psychrobacter cryohalolentis (strain ATCC BAA-1226 / DSM 17306 / VKM B-2378 / K5)).